The sequence spans 474 residues: Bifunctional protein HldE (474 aa).

The interval 1–318 (MKLSMPRFDQ…RAIQREEGSE (318 aa)) is ribokinase. Residue 194–197 (NLSE) participates in ATP binding. Asp-263 is an active-site residue. Positions 343–474 (FTNGCFDILH…AIVEKIRGQG (132 aa)) are cytidylyltransferase.

The protein in the N-terminal section; belongs to the carbohydrate kinase PfkB family. It in the C-terminal section; belongs to the cytidylyltransferase family. In terms of assembly, homodimer.

The enzyme catalyses D-glycero-beta-D-manno-heptose 7-phosphate + ATP = D-glycero-beta-D-manno-heptose 1,7-bisphosphate + ADP + H(+). It carries out the reaction D-glycero-beta-D-manno-heptose 1-phosphate + ATP + H(+) = ADP-D-glycero-beta-D-manno-heptose + diphosphate. It participates in nucleotide-sugar biosynthesis; ADP-L-glycero-beta-D-manno-heptose biosynthesis; ADP-L-glycero-beta-D-manno-heptose from D-glycero-beta-D-manno-heptose 7-phosphate: step 1/4. Its pathway is nucleotide-sugar biosynthesis; ADP-L-glycero-beta-D-manno-heptose biosynthesis; ADP-L-glycero-beta-D-manno-heptose from D-glycero-beta-D-manno-heptose 7-phosphate: step 3/4. In terms of biological role, catalyzes the phosphorylation of D-glycero-D-manno-heptose 7-phosphate at the C-1 position to selectively form D-glycero-beta-D-manno-heptose-1,7-bisphosphate. Catalyzes the ADP transfer from ATP to D-glycero-beta-D-manno-heptose 1-phosphate, yielding ADP-D-glycero-beta-D-manno-heptose. In Pseudomonas savastanoi pv. phaseolicola (strain 1448A / Race 6) (Pseudomonas syringae pv. phaseolicola (strain 1448A / Race 6)), this protein is Bifunctional protein HldE.